Here is a 429-residue protein sequence, read N- to C-terminus: Adenylosuccinate synthetase (429 aa).

GTP is bound by residues 11-17 (GDEGKGK) and 39-41 (GHT). Aspartate 12 functions as the Proton acceptor in the catalytic mechanism. The Mg(2+) site is built by aspartate 12 and glycine 39. Residues 12-15 (DEGK), 37-40 (NAGH), threonine 130, arginine 144, asparagine 226, threonine 241, and arginine 305 each bind IMP. Histidine 40 (proton donor) is an active-site residue. A substrate-binding site is contributed by 301-307 (VTTGRRR). GTP is bound by residues arginine 307, 333 to 335 (KLD), and 415 to 417 (GVG).

It belongs to the adenylosuccinate synthetase family. Homodimer. Mg(2+) is required as a cofactor.

Its subcellular location is the cytoplasm. The enzyme catalyses IMP + L-aspartate + GTP = N(6)-(1,2-dicarboxyethyl)-AMP + GDP + phosphate + 2 H(+). It functions in the pathway purine metabolism; AMP biosynthesis via de novo pathway; AMP from IMP: step 1/2. Its function is as follows. Plays an important role in the de novo pathway and in the salvage pathway of purine nucleotide biosynthesis. Catalyzes the first committed step in the biosynthesis of AMP from IMP. The sequence is that of Adenylosuccinate synthetase from Yarrowia lipolytica (strain CLIB 122 / E 150) (Yeast).